The chain runs to 274 residues: Type II restriction enzyme HgiEI (274 aa).

The protein belongs to the TdeIII type II restriction endonuclease family.

It carries out the reaction Endonucleolytic cleavage of DNA to give specific double-stranded fragments with terminal 5'-phosphates.. A P subtype restriction enzyme that recognizes the double-stranded sequence 5'-GGWCC-3' and cleaves after G-1. This system is more active than isoschizomeric RM.HgiBI. The chain is Type II restriction enzyme HgiEI from Herpetosiphon aurantiacus (Herpetosiphon giganteus).